A 604-amino-acid chain; its full sequence is Putative O-acetyltransferase SAR0937 (604 aa).

Transmembrane regions (helical) follow at residues 15 to 35, 43 to 63, 85 to 105, 150 to 170, 176 to 196, 212 to 232, 240 to 260, 267 to 287, 310 to 330, 332 to 352, and 377 to 397; these read YMPG…IYHL, GFLG…SLLL, LLPA…LLKS, AIEE…LLTI, IGFI…FIYS, LQTL…KLKN, YVID…FFII, IYDG…ASVV, YSLY…YVDG, IPVY…ELSY, and FIRM…LVGA. Catalysis depends on residues Ser459, Asp581, and His584.

Belongs to the acyltransferase 3 family.

The protein localises to the cell membrane. This is Putative O-acetyltransferase SAR0937 from Staphylococcus aureus (strain MRSA252).